Here is a 163-residue protein sequence, read N- to C-terminus: Nucleotide-binding protein YajQ (163 aa).

Belongs to the YajQ family.

Nucleotide-binding protein. This is Nucleotide-binding protein YajQ from Escherichia coli O127:H6 (strain E2348/69 / EPEC).